A 745-amino-acid chain; its full sequence is Junction plakoglobin (745 aa).

Met-1 carries the N-acetylmethionine modification. The O-linked (GlcNAc) threonine glycan is linked to Thr-14. Ser-99 and Ser-125 each carry phosphoserine. ARM repeat units lie at residues Asn-132–Lys-171, Lys-172–His-215, Arg-216–Leu-255, Glu-258–Tyr-297, Gly-298–Cys-341, Pro-342–Asp-381, Ala-383–Cys-420, Ser-423–Ser-464, Glu-470–Leu-510, Pro-512–Thr-551, Pro-574–Gln-613, and Lys-615–Arg-661. Positions Asn-132–Tyr-297 are interaction with DSC1 and DSG1. Ser-182 is subject to Phosphoserine. The tract at residues Pro-574–Arg-661 is interaction with DSC1. Ser-665 and Ser-730 each carry phosphoserine.

Belongs to the beta-catenin family. Homodimer. Component of an E-cadherin/catenin adhesion complex composed of at least E-cadherin/CDH1 and gamma-catenin/JUP, and possibly alpha-catenin/CTNNA1; the complex is located to adherens junctions. The stable association of CTNNA1 is controversial as CTNNA1 was shown not to bind to F-actin when assembled in the complex. Interacts with MUC1. Interacts with CAV1. Interacts with PTPRJ. Interacts with DSG1. Interacts with DSC1 and DSC2. Interacts with PKP2. Interacts with PKP3 (via N-terminus); the interaction is required for PKP3 localization to desmosome cell-cell junctions. Interacts with DSG4. May be phosphorylated by FER. As to expression, expressed in the mammary epithelium (at protein level).

The protein resides in the cell junction. Its subcellular location is the adherens junction. The protein localises to the desmosome. It is found in the cytoplasm. It localises to the cytoskeleton. The protein resides in the cell membrane. Its subcellular location is the nucleus. Common junctional plaque protein. The membrane-associated plaques are architectural elements in an important strategic position to influence the arrangement and function of both the cytoskeleton and the cells within the tissue. The presence of plakoglobin in both the desmosomes and in the intermediate junctions suggests that it plays a central role in the structure and function of submembranous plaques. Acts as a substrate for VE-PTP and is required by it to stimulate VE-cadherin function in endothelial cells. Can replace beta-catenin in E-cadherin/catenin adhesion complexes which are proposed to couple cadherins to the actin cytoskeleton. The polypeptide is Junction plakoglobin (Mus musculus (Mouse)).